A 181-amino-acid chain; its full sequence is UPF0302 protein lmo1921 (181 aa).

It belongs to the UPF0302 family.

This Listeria monocytogenes serovar 1/2a (strain ATCC BAA-679 / EGD-e) protein is UPF0302 protein lmo1921.